Consider the following 85-residue polypeptide: UPF0181 protein YPO1774/y2534/YP_1619 (85 aa).

The segment at 50–85 (QAMAIFEDHDFDEHTESDYRRDDEPDADDIEDPYEG) is disordered. The span at 55-72 (FEDHDFDEHTESDYRRDD) shows a compositional bias: basic and acidic residues. Positions 73-85 (EPDADDIEDPYEG) are enriched in acidic residues.

This sequence belongs to the UPF0181 family.

The polypeptide is UPF0181 protein YPO1774/y2534/YP_1619 (Yersinia pestis).